A 176-amino-acid polypeptide reads, in one-letter code: ATP-dependent protease subunit HslV (176 aa).

Thr-6 is an active-site residue. Ser-161, Cys-164, and Thr-167 together coordinate Na(+).

The protein belongs to the peptidase T1B family. HslV subfamily. In terms of assembly, a double ring-shaped homohexamer of HslV is capped on each side by a ring-shaped HslU homohexamer. The assembly of the HslU/HslV complex is dependent on binding of ATP.

Its subcellular location is the cytoplasm. It carries out the reaction ATP-dependent cleavage of peptide bonds with broad specificity.. With respect to regulation, allosterically activated by HslU binding. In terms of biological role, protease subunit of a proteasome-like degradation complex believed to be a general protein degrading machinery. This Aquifex aeolicus (strain VF5) protein is ATP-dependent protease subunit HslV.